The sequence spans 329 residues: Putative helicase 109L (329 aa).

The Helicase ATP-binding domain maps to 105–259 (LTLLTQHKSC…LFDMFFGPEM (155 aa)). An ATP-binding site is contributed by 118 to 125 (CYTGFGKT). Residues 212–215 (DEAH) carry the DEAH box motif.

This sequence belongs to the DEAD box helicase family. DEAH subfamily.

The protein is Putative helicase 109L of Invertebrate iridescent virus 3 (IIV-3).